The following is a 312-amino-acid chain: Erlin (312 aa).

The Cytoplasmic portion of the chain corresponds to 1 to 3; it reads MLT. Residues 4–24 traverse the membrane as a helical segment; that stretch reads ELALGLFALWIAIFSQALHKI. Topologically, residues 25–312 are lumenal; it reads EEGHVGVYYR…FVMGTTQQTV (288 aa). Asn104 carries an N-linked (GlcNAc...) asparagine glycan.

Belongs to the band 7/mec-2 family. In terms of assembly, seems to form a multimeric complex. In terms of tissue distribution, expressed in the germline only.

The protein resides in the endoplasmic reticulum membrane. The sequence is that of Erlin from Caenorhabditis elegans.